A 293-amino-acid polypeptide reads, in one-letter code: Epimerase family protein SDR39U1 (293 aa).

Residues 31–32 (SR), 58–59 (LA), Glu77, Arg82, and Val160 each bind NADP(+).

The protein belongs to the NAD(P)-dependent epimerase/dehydratase family. SDR39U1 subfamily. Expressed in adrenal gland.

Its function is as follows. Putative NADP-dependent oxidoreductase. The sequence is that of Epimerase family protein SDR39U1 (SDR39U1) from Homo sapiens (Human).